We begin with the raw amino-acid sequence, 402 residues long: CCA-adding enzyme (402 aa).

The ATP site is built by glycine 32 and arginine 35. CTP-binding residues include glycine 32 and arginine 35. Mg(2+) is bound by residues aspartate 45 and aspartate 47. Residues arginine 119, aspartate 162, arginine 165, arginine 168, and arginine 171 each contribute to the ATP site. Arginine 119, aspartate 162, arginine 165, arginine 168, and arginine 171 together coordinate CTP.

This sequence belongs to the tRNA nucleotidyltransferase/poly(A) polymerase family. Bacterial CCA-adding enzyme type 3 subfamily. In terms of assembly, homodimer. It depends on Mg(2+) as a cofactor.

It carries out the reaction a tRNA precursor + 2 CTP + ATP = a tRNA with a 3' CCA end + 3 diphosphate. It catalyses the reaction a tRNA with a 3' CCA end + 2 CTP + ATP = a tRNA with a 3' CCACCA end + 3 diphosphate. Its function is as follows. Catalyzes the addition and repair of the essential 3'-terminal CCA sequence in tRNAs without using a nucleic acid template. Adds these three nucleotides in the order of C, C, and A to the tRNA nucleotide-73, using CTP and ATP as substrates and producing inorganic pyrophosphate. tRNA 3'-terminal CCA addition is required both for tRNA processing and repair. Also involved in tRNA surveillance by mediating tandem CCA addition to generate a CCACCA at the 3' terminus of unstable tRNAs. While stable tRNAs receive only 3'-terminal CCA, unstable tRNAs are marked with CCACCA and rapidly degraded. This Lactococcus lactis subsp. cremoris (strain MG1363) protein is CCA-adding enzyme.